The primary structure comprises 147 residues: Hemoglobin subunit beta-1 (147 aa).

Residues 3 to 147 (EWTAAERRHV…VVSALGRQYH (145 aa)) enclose the Globin domain. Heme b contacts are provided by His64 and His93.

It belongs to the globin family. In terms of assembly, hb 1 is a heterotetramer of two alpha-1 and two beta-1 chains. Red blood cells.

Its function is as follows. Involved in oxygen transport from gills to the various peripheral tissues. The protein is Hemoglobin subunit beta-1 (hbb1) of Gadus morhua (Atlantic cod).